A 486-amino-acid chain; its full sequence is Galactose-1-phosphate uridylyltransferase (486 aa).

It belongs to the galactose-1-phosphate uridylyltransferase type 2 family.

Its subcellular location is the cytoplasm. It catalyses the reaction alpha-D-galactose 1-phosphate + UDP-alpha-D-glucose = alpha-D-glucose 1-phosphate + UDP-alpha-D-galactose. The protein operates within carbohydrate metabolism; galactose metabolism. In Lacticaseibacillus casei (strain BL23) (Lactobacillus casei), this protein is Galactose-1-phosphate uridylyltransferase.